The following is a 1273-amino-acid chain: Lysine-specific histone demethylase 2 (1273 aa).

Polar residues predominate over residues 199–230 (ENFFDANSPSSQQFPSTYPSRSQNPLSSSGDG). A disordered region spans residues 199–237 (ENFFDANSPSSQQFPSTYPSRSQNPLSSSGDGSTAIHAG). A coiled-coil region spans residues 247–307 (FSNYPYPLDA…LSKSVDNAVL (61 aa)). An SWIRM domain is found at 394-490 (AAEAARKCNL…YGCLSFDSSF (97 aa)). FAD is bound by residues 509-551 (IAVV…ILEA), Thr-517, Glu-550, Arg-558, and 572-573 (TQ). Positions 542–1198 (LPPKVIILEA…GKILRYQRLT (657 aa)) are demethylase activity. Positions 571-596 (ATQINHHTSNSNSISSNSTSLNPKDV) are disordered. A compositionally biased stretch (low complexity) spans 574–590 (INHHTSNSNSISSNSTS). Residues 681–767 (SVRISWISQF…NTVDTDFSKD (87 aa)) adopt a coiled-coil conformation. A DNA-binding region (HMG box) is located at residues 1115–1195 (SKPNANPFLL…AYAGKILRYQ (81 aa)). Residues Asp-1147 and 1156-1157 (ET) contribute to the FAD site. Residues 1215–1273 (KCQDEPIPDDEARLFMQAQREEEQRKQTQDDNISKSREASDEEYHDDGSSDSGYNGTRY) are disordered. Over residues 1233–1253 (QREEEQRKQTQDDNISKSREA) the composition is skewed to basic and acidic residues. Over residues 1264–1273 (SDSGYNGTRY) the composition is skewed to polar residues.

This sequence belongs to the flavin monoamine oxidase family. Component of the SWM histone demethylase complex composed of at least lsd1, lsd2, phf1 and phf2. Interacts directly with lsd1. FAD is required as a cofactor.

Its subcellular location is the nucleus. Functionally, catalytic component of the SWM histone demethylase complex that specifically demethylates H3K9me2, a specific tag for epigenetic transcriptional activation, thereby acting as a corepressor. Acts by oxidizing the substrate by FAD to generate the corresponding imine that is subsequently hydrolyzed. Has a role in regulating heterochromatin propagation and euchromatic transcription. Also has a gene activating role. The polypeptide is Lysine-specific histone demethylase 2 (lsd2) (Schizosaccharomyces pombe (strain 972 / ATCC 24843) (Fission yeast)).